The following is a 242-amino-acid chain: 2-C-methyl-D-erythritol 4-phosphate cytidylyltransferase (242 aa).

It belongs to the IspD/TarI cytidylyltransferase family. IspD subfamily.

The enzyme catalyses 2-C-methyl-D-erythritol 4-phosphate + CTP + H(+) = 4-CDP-2-C-methyl-D-erythritol + diphosphate. The protein operates within isoprenoid biosynthesis; isopentenyl diphosphate biosynthesis via DXP pathway; isopentenyl diphosphate from 1-deoxy-D-xylulose 5-phosphate: step 2/6. Catalyzes the formation of 4-diphosphocytidyl-2-C-methyl-D-erythritol from CTP and 2-C-methyl-D-erythritol 4-phosphate (MEP). This is 2-C-methyl-D-erythritol 4-phosphate cytidylyltransferase from Vesicomyosocius okutanii subsp. Calyptogena okutanii (strain HA).